A 474-amino-acid chain; its full sequence is tRNA-2-methylthio-N(6)-dimethylallyladenosine synthase (474 aa).

The region spanning 3–120 is the MTTase N-terminal domain; it reads KKLHIKTWGC…LPEMINHVQG (118 aa). C12, C49, C83, C157, C161, and C164 together coordinate [4Fe-4S] cluster. The Radical SAM core domain occupies 143–375; sequence RAEGPTAFVS…QQRISQQAME (233 aa). One can recognise a TRAM domain in the interval 378–441; it reads RKMVGTVQRV…ASSLRGILLR (64 aa).

Belongs to the methylthiotransferase family. MiaB subfamily. In terms of assembly, monomer. It depends on [4Fe-4S] cluster as a cofactor.

It is found in the cytoplasm. It carries out the reaction N(6)-dimethylallyladenosine(37) in tRNA + (sulfur carrier)-SH + AH2 + 2 S-adenosyl-L-methionine = 2-methylsulfanyl-N(6)-dimethylallyladenosine(37) in tRNA + (sulfur carrier)-H + 5'-deoxyadenosine + L-methionine + A + S-adenosyl-L-homocysteine + 2 H(+). Catalyzes the methylthiolation of N6-(dimethylallyl)adenosine (i(6)A), leading to the formation of 2-methylthio-N6-(dimethylallyl)adenosine (ms(2)i(6)A) at position 37 in tRNAs that read codons beginning with uridine. In Yersinia pestis bv. Antiqua (strain Angola), this protein is tRNA-2-methylthio-N(6)-dimethylallyladenosine synthase.